The primary structure comprises 404 residues: Chorismate synthase (404 aa).

Positions 40 and 46 each coordinate NADP(+). Residues 136 to 138 (RAS), 257 to 258 (QA), Gly-301, 316 to 320 (KPIST), and Arg-342 each bind FMN.

The protein belongs to the chorismate synthase family. As to quaternary structure, homotetramer. FMNH2 serves as cofactor.

The catalysed reaction is 5-O-(1-carboxyvinyl)-3-phosphoshikimate = chorismate + phosphate. It participates in metabolic intermediate biosynthesis; chorismate biosynthesis; chorismate from D-erythrose 4-phosphate and phosphoenolpyruvate: step 7/7. Functionally, catalyzes the anti-1,4-elimination of the C-3 phosphate and the C-6 proR hydrogen from 5-enolpyruvylshikimate-3-phosphate (EPSP) to yield chorismate, which is the branch point compound that serves as the starting substrate for the three terminal pathways of aromatic amino acid biosynthesis. This reaction introduces a second double bond into the aromatic ring system. The sequence is that of Chorismate synthase from Mycolicibacterium vanbaalenii (strain DSM 7251 / JCM 13017 / BCRC 16820 / KCTC 9966 / NRRL B-24157 / PYR-1) (Mycobacterium vanbaalenii).